The chain runs to 136 residues: Protein NrdI (136 aa).

It belongs to the NrdI family.

Probably involved in ribonucleotide reductase function. This is Protein NrdI from Enterobacter sp. (strain 638).